The chain runs to 177 residues: Large ribosomal subunit protein uL6 (177 aa).

Residues 152–171 (RPPEPYKGKGVRYDDEEVRR) are compositionally biased toward basic and acidic residues. Residues 152-177 (RPPEPYKGKGVRYDDEEVRRKEAKKK) are disordered.

Belongs to the universal ribosomal protein uL6 family. As to quaternary structure, part of the 50S ribosomal subunit.

This protein binds to the 23S rRNA, and is important in its secondary structure. It is located near the subunit interface in the base of the L7/L12 stalk, and near the tRNA binding site of the peptidyltransferase center. This chain is Large ribosomal subunit protein uL6, found in Shewanella sp. (strain MR-4).